A 947-amino-acid chain; its full sequence is MSSTEAKQYKEKPSKEYLHASDGDDPANNSAASSSSSSSTSTSASSSAAAVPRKAAAASAADDSDSDEDIDQLIDELQSNYGEGDESGEEEVRTDGVHAGQRVVPEKDLSTDPAYGLTSDEVARRRKKYGLNQMAEENESLIVKFLMFFVGPIQFVMEAAAILAAGLSDWVDVGVICALLLLNASVGFIQEFQAGSIVDELKKTLANTATVIRDGQLIEIPANEVVPGEILQLESGTIAPADGRIVTEDCFLQIDQSAITGESLAAEKHYGDEVFSSSTVKTGEAFMVVTATGDNTFVGRAAALVGQASGVEGHFTEVLNGIGIILLVLVIATLLLVWTACFYRTVGIVSILRYTLGITIIGVPVGLPAVVTTTMAVGAAYLAKKQAIVQKLSAIESLAGVEILCSDKTGTLTKNKLSLHEPYTVEGVSPDDLMLTACLAASRKKKGLDAIDKAFLKSLIEYPKAKDALTKYKVLEFHPFDPVSKKVTAVVESPEGERIVCVKGAPLFVLKTVEEDHPIPEDVHENYENKVAELASRGFRALGVARKRGEGHWEILGVMPCMDPPRDDTAQTINEARNLGLRIKMLTGDAVGIAKETCRQLGLGTNIYNAERLGLGGGGDMPGSELADFVENADGFAEVFPQHKYRVVEILQNRGYLVAMTGDGVNDAPSLKKADTGIAVEGATDAARSAADIVFLAPGLSAIIDALKTSRQIFHRMYSYVVYRIALSLHLEIFLGLWIAILNNSLDINLIVFIAIFADVATLTIAYDNAPYAPEPVKWNLPRLWGMSIILGIVLAIGSWITLTTMFLPNGGIIQNFGAMNGVMFLQISLTENWLIFVTRAAGPFWSSIPSWQLAGAVFAVDIIATMFTLFGWWSENWTDIVSVVRVWIWSIGIFCVLGGFYYIMSTSQAFDRLMNGKSLKEKKSTRSVEDFMAAMQRVSTQHEKSS.

The tract at residues 1-103 (MSSTEAKQYK…TDGVHAGQRV (103 aa)) is disordered. Topologically, residues 1–144 (MSSTEAKQYK…AEENESLIVK (144 aa)) are cytoplasmic. The span at 7–22 (KQYKEKPSKEYLHASD) shows a compositional bias: basic and acidic residues. The span at 26–61 (PANNSAASSSSSSSTSTSASSSAAAVPRKAAAASAA) shows a compositional bias: low complexity. Residues 62-74 (DDSDSDEDIDQLI) show a composition bias toward acidic residues. The chain crosses the membrane as a helical span at residues 145 to 165 (FLMFFVGPIQFVMEAAAILAA). Topologically, residues 166–169 (GLSD) are extracellular. A helical transmembrane segment spans residues 170–189 (WVDVGVICALLLLNASVGFI). Residues 190–320 (QEFQAGSIVD…VEGHFTEVLN (131 aa)) lie on the Cytoplasmic side of the membrane. A helical membrane pass occupies residues 321–342 (GIGIILLVLVIATLLLVWTACF). Residues 343 to 353 (YRTVGIVSILR) are Extracellular-facing. A helical membrane pass occupies residues 354 to 376 (YTLGITIIGVPVGLPAVVTTTMA). The Cytoplasmic portion of the chain corresponds to 377–748 (VGAAYLAKKQ…IAILNNSLDI (372 aa)). Asp-407 acts as the 4-aspartylphosphate intermediate in catalysis. Mg(2+) is bound by residues Asp-663 and Asp-667. The helical transmembrane segment at 749–767 (NLIVFIAIFADVATLTIAY) threads the bilayer. At 768–783 (DNAPYAPEPVKWNLPR) the chain is on the extracellular side. A helical transmembrane segment spans residues 784–803 (LWGMSIILGIVLAIGSWITL). Topologically, residues 804–853 (TTMFLPNGGIIQNFGAMNGVMFLQISLTENWLIFVTRAAGPFWSSIPSWQ) are cytoplasmic. Residues 854 to 874 (LAGAVFAVDIIATMFTLFGWW) form a helical membrane-spanning segment. The Extracellular portion of the chain corresponds to 875–886 (SENWTDIVSVVR). The helical transmembrane segment at 887–903 (VWIWSIGIFCVLGGFYY) threads the bilayer. The Cytoplasmic segment spans residues 904–947 (IMSTSQAFDRLMNGKSLKEKKSTRSVEDFMAAMQRVSTQHEKSS).

It belongs to the cation transport ATPase (P-type) (TC 3.A.3) family. Type IIIA subfamily.

The protein localises to the cell membrane. The catalysed reaction is ATP + H2O + H(+)(in) = ADP + phosphate + 2 H(+)(out). Its function is as follows. The plasma membrane ATPase of plants and fungi is a hydrogen ion pump. The proton gradient it generates drives the active transport of nutrients by H(+)-symport. The resulting external acidification and/or internal alkinization may mediate growth responses. In Saccharomyces cerevisiae (strain ATCC 204508 / S288c) (Baker's yeast), this protein is Plasma membrane ATPase 2 (PMA2).